Reading from the N-terminus, the 158-residue chain is uncharacterized protein (158 aa).

This is an uncharacterized protein from Methanocaldococcus jannaschii (strain ATCC 43067 / DSM 2661 / JAL-1 / JCM 10045 / NBRC 100440) (Methanococcus jannaschii).